We begin with the raw amino-acid sequence, 255 residues long: Lactose phosphotransferase system repressor (255 aa).

An HTH deoR-type domain is found at Lys3 to Leu58. Residues Ile20 to Asp39 constitute a DNA-binding region (H-T-H motif).

In terms of biological role, repressor of the lactose catabolism operon. Galactose-6-phosphate is the inducer. The chain is Lactose phosphotransferase system repressor (lacR) from Lactococcus lactis subsp. lactis (Streptococcus lactis).